We begin with the raw amino-acid sequence, 462 residues long: A-type ATP synthase subunit B (462 aa).

The protein belongs to the ATPase alpha/beta chains family. As to quaternary structure, has multiple subunits with at least A(3), B(3), C, D, E, F, H, I and proteolipid K(x).

It is found in the cell membrane. Functionally, component of the A-type ATP synthase that produces ATP from ADP in the presence of a proton gradient across the membrane. The B chain is a regulatory subunit. In Methanococcus vannielii (strain ATCC 35089 / DSM 1224 / JCM 13029 / OCM 148 / SB), this protein is A-type ATP synthase subunit B.